The chain runs to 895 residues: Stonin-2 (895 aa).

Disordered regions lie at residues 15 to 119 (WVSF…PPHK), 145 to 222 (SESS…APPV), and 234 to 280 (EDNE…KSTL). Positions 64-73 (SHSEQDDSSE) are enriched in basic and acidic residues. The segment covering 145-193 (SESSWTTHSEDTSSPSVAPSYTDLQLINTEEQASGRASGTDSTDNSSSL) has biased composition (polar residues). Positions 241–251 (PSPPVPSPKKP) are enriched in pro residues. Thr-253 bears the Phosphothreonine mark. A phosphoserine mark is found at Ser-278 and Ser-299. 2 short sequence motifs (NPF) span residues 310 to 312 (NPF) and 326 to 328 (NPF). Positions 386–421 (QIDDPDPVGNTALPDDDPTASVELDAPSPASALSQP) are disordered. Residues 424–557 (GWPMMLRIPE…DLPVLSMDLS (134 aa)) enclose the SHD domain. Residues 565-872 (EEEITVDVRD…AHYSYKVEIE (308 aa)) enclose the MHD domain. Phosphoserine is present on Ser-759.

It belongs to the Stoned B family. Interacts with the second C2 domain of synaptotagmins SYT1 and SYT2. Interacts with EPS15, EPS15R and ITSN1. Interacts indirectly with the AP-2 adapter complex. Interacts with TOR1A and COPS4; the interaction controls STON2 protein stability. Post-translationally, phosphorylated in vitro by PKD. In terms of processing, neddylated; deneddylated via its interaction with the COP9 signalosome (CSN) complex through TOR1A and COPS4. Ubiquitinated; leading to its degradation.

Its subcellular location is the cytoplasm. The protein resides in the membrane. The protein localises to the synapse. It localises to the synaptosome. Adapter protein involved in endocytic machinery. Involved in the synaptic vesicle recycling. May facilitate clathrin-coated vesicle uncoating. This Mus musculus (Mouse) protein is Stonin-2 (Ston2).